The sequence spans 523 residues: MNTFPLFFKLEDRKVLIVGGGDVALRKADLLSRAGACITVLAPSISHEIQALLSDSKHALIYENYNKTYMTDSRVIIAATDDETLNHQIHSDATALNIPVNVVDTPHLCDFIFPAIVDRNPIVIGISSNGKAPVLARLLRARLETLIPQGYGKLAKLAGEFRGDVKAKIPTLTGRRQFWEQVFEGKVSQLMFSGNENEAIAQLQADLDNTAANITAKNATDESTEAQNTMGEVYIVGAGPGDPELLTFKALRLMQQADIVYYDALVSPQVLDLCRRDADKVFVGKKRSNHAVAQLGINELLVNSAKEGRRVVRLKGGDPFIFGRGGEEIESLRSHNVPYQVVPGITAANAAASYAGIPLTHRDHSQSVRFVTGFLKAGAPNNNFKSFLNTDETVVFYMGLHSLPRLTQGLIDAGRSAKTPIAIVSNASMPNQQVLTGTLASIVELQAQHQLPTPALLIMGDVVSLHHDLAWYNNKKTSENDNNWLRGGTATTPKPNPNQQAHALSMIANLATEDGGLEQLVID.

A precorrin-2 dehydrogenase /sirohydrochlorin ferrochelatase region spans residues 1–203; it reads MNTFPLFFKL…GNENEAIAQL (203 aa). NAD(+)-binding positions include 22 to 23 and 43 to 44; these read DV and PS. Ser-128 is modified (phosphoserine). The tract at residues 231–523 is uroporphyrinogen-III C-methyltransferase; it reads GEVYIVGAGP…DGGLEQLVID (293 aa). Pro-240 contacts S-adenosyl-L-methionine. Asp-263 functions as the Proton acceptor in the catalytic mechanism. Lys-285 acts as the Proton donor in catalysis. Residues 316 to 318, Ile-321, 346 to 347, Met-398, and Ala-427 each bind S-adenosyl-L-methionine; these read GGD and TA.

This sequence in the N-terminal section; belongs to the precorrin-2 dehydrogenase / sirohydrochlorin ferrochelatase family. In the C-terminal section; belongs to the precorrin methyltransferase family.

The catalysed reaction is uroporphyrinogen III + 2 S-adenosyl-L-methionine = precorrin-2 + 2 S-adenosyl-L-homocysteine + H(+). The enzyme catalyses precorrin-2 + NAD(+) = sirohydrochlorin + NADH + 2 H(+). It carries out the reaction siroheme + 2 H(+) = sirohydrochlorin + Fe(2+). The protein operates within cofactor biosynthesis; adenosylcobalamin biosynthesis; precorrin-2 from uroporphyrinogen III: step 1/1. It functions in the pathway cofactor biosynthesis; adenosylcobalamin biosynthesis; sirohydrochlorin from precorrin-2: step 1/1. It participates in porphyrin-containing compound metabolism; siroheme biosynthesis; precorrin-2 from uroporphyrinogen III: step 1/1. Its pathway is porphyrin-containing compound metabolism; siroheme biosynthesis; siroheme from sirohydrochlorin: step 1/1. The protein operates within porphyrin-containing compound metabolism; siroheme biosynthesis; sirohydrochlorin from precorrin-2: step 1/1. Functionally, multifunctional enzyme that catalyzes the SAM-dependent methylations of uroporphyrinogen III at position C-2 and C-7 to form precorrin-2 via precorrin-1. Then it catalyzes the NAD-dependent ring dehydrogenation of precorrin-2 to yield sirohydrochlorin. Finally, it catalyzes the ferrochelation of sirohydrochlorin to yield siroheme. This Psychrobacter cryohalolentis (strain ATCC BAA-1226 / DSM 17306 / VKM B-2378 / K5) protein is Siroheme synthase.